A 266-amino-acid chain; its full sequence is GTP cyclohydrolase FolE2 (266 aa).

Belongs to the GTP cyclohydrolase IV family.

It carries out the reaction GTP + H2O = 7,8-dihydroneopterin 3'-triphosphate + formate + H(+). It functions in the pathway cofactor biosynthesis; 7,8-dihydroneopterin triphosphate biosynthesis; 7,8-dihydroneopterin triphosphate from GTP: step 1/1. Its function is as follows. Converts GTP to 7,8-dihydroneopterin triphosphate. The protein is GTP cyclohydrolase FolE2 of Syntrophotalea carbinolica (strain DSM 2380 / NBRC 103641 / GraBd1) (Pelobacter carbinolicus).